A 124-amino-acid polypeptide reads, in one-letter code: uncharacterized protein (124 aa).

A disordered region spans residues 82 to 124 (SDLGIEGGERAQGQNAHSVHGPGLQTERGGSQLQMVGHPLREL).

This is an uncharacterized protein from Human cytomegalovirus (strain AD169) (HHV-5).